Reading from the N-terminus, the 81-residue chain is Probable small nuclear ribonucleoprotein G (81 aa).

Positions 5-76 constitute a Sm domain; the sequence is GQPPALKKYM…VVTVEALEPV (72 aa).

Belongs to the snRNP Sm proteins family.

It localises to the nucleus. Probable common Sm protein, is found in U1 and U2 snRNPs and may be part of the spliceosome. The sequence is that of Probable small nuclear ribonucleoprotein G (C29) from Medicago sativa (Alfalfa).